Reading from the N-terminus, the 225-residue chain is Thymidylate kinase (225 aa).

Position 9–16 (9–16 (GIEGCGKT)) interacts with ATP.

The protein belongs to the thymidylate kinase family.

It catalyses the reaction dTMP + ATP = dTDP + ADP. Its function is as follows. Phosphorylation of dTMP to form dTDP in both de novo and salvage pathways of dTTP synthesis. In Citrifermentans bemidjiense (strain ATCC BAA-1014 / DSM 16622 / JCM 12645 / Bem) (Geobacter bemidjiensis), this protein is Thymidylate kinase.